The primary structure comprises 268 residues: Kynurenine formamidase (268 aa).

Residues 33–37 (HGGGW) carry the HGGXW motif. Ser-107 acts as the Nucleophile in catalysis. Catalysis depends on residues Asp-219 and His-251.

The protein belongs to the kynurenine formamidase family. Homodimer.

It catalyses the reaction N-formyl-L-kynurenine + H2O = L-kynurenine + formate + H(+). It participates in amino-acid degradation; L-tryptophan degradation via kynurenine pathway; L-kynurenine from L-tryptophan: step 2/2. In terms of biological role, catalyzes the hydrolysis of N-formyl-L-kynurenine to L-kynurenine, the second step in the kynurenine pathway of tryptophan degradation. Kynurenine may be further oxidized to nicotinic acid, NAD(H) and NADP(H). Required for elimination of toxic metabolites. The sequence is that of Kynurenine formamidase from Scheffersomyces stipitis (strain ATCC 58785 / CBS 6054 / NBRC 10063 / NRRL Y-11545) (Yeast).